A 554-amino-acid chain; its full sequence is Urocanate hydratase (554 aa).

Residues 51–52, glutamine 129, 175–177, glutamate 195, 241–242, 262–266, 272–273, and tyrosine 321 contribute to the NAD(+) site; these read GG, GMG, NA, QTSAH, and YL. Cysteine 409 is an active-site residue. Glycine 491 contacts NAD(+).

The protein belongs to the urocanase family. The cofactor is NAD(+).

The protein resides in the cytoplasm. The enzyme catalyses 4-imidazolone-5-propanoate = trans-urocanate + H2O. It participates in amino-acid degradation; L-histidine degradation into L-glutamate; N-formimidoyl-L-glutamate from L-histidine: step 2/3. In terms of biological role, catalyzes the conversion of urocanate to 4-imidazolone-5-propionate. The chain is Urocanate hydratase from Caulobacter vibrioides (strain ATCC 19089 / CIP 103742 / CB 15) (Caulobacter crescentus).